The following is a 110-amino-acid chain: Phosphoribosyl-ATP pyrophosphatase (110 aa).

This sequence belongs to the PRA-PH family.

Its subcellular location is the cytoplasm. The enzyme catalyses 1-(5-phospho-beta-D-ribosyl)-ATP + H2O = 1-(5-phospho-beta-D-ribosyl)-5'-AMP + diphosphate + H(+). It functions in the pathway amino-acid biosynthesis; L-histidine biosynthesis; L-histidine from 5-phospho-alpha-D-ribose 1-diphosphate: step 2/9. This Lacticaseibacillus casei (strain BL23) (Lactobacillus casei) protein is Phosphoribosyl-ATP pyrophosphatase.